The following is a 301-amino-acid chain: Aldose reductase (301 aa).

Gly11–Gly20 lines the NADP(+) pocket. Tyr51 acts as the Proton donor in catalysis. His111 lines the substrate pocket. NADP(+) is bound at residue Ser209 to Asn266.

It belongs to the aldo/keto reductase family.

The protein resides in the cytoplasm. It carries out the reaction an alditol + NAD(+) = an aldose + NADH + H(+). The catalysed reaction is an alditol + NADP(+) = an aldose + NADPH + H(+). Catalyzes the NADPH-dependent reduction of a wide variety of carbonyl-containing compounds to their corresponding alcohols with a broad range of catalytic efficiencies. This chain is Aldose reductase, found in Encephalitozoon cuniculi (strain GB-M1) (Microsporidian parasite).